The following is a 361-amino-acid chain: 3-dehydroquinate synthase (361 aa).

Residues 71–76, 105–109, 129–130, Lys-142, and Lys-151 each bind NAD(+); these read DGEQYK, GVIGD, and TT. Positions 184, 247, and 264 each coordinate Zn(2+).

Belongs to the sugar phosphate cyclases superfamily. Dehydroquinate synthase family. It depends on Co(2+) as a cofactor. Zn(2+) serves as cofactor. NAD(+) is required as a cofactor.

Its subcellular location is the cytoplasm. It carries out the reaction 7-phospho-2-dehydro-3-deoxy-D-arabino-heptonate = 3-dehydroquinate + phosphate. Its pathway is metabolic intermediate biosynthesis; chorismate biosynthesis; chorismate from D-erythrose 4-phosphate and phosphoenolpyruvate: step 2/7. Catalyzes the conversion of 3-deoxy-D-arabino-heptulosonate 7-phosphate (DAHP) to dehydroquinate (DHQ). This Pectobacterium atrosepticum (strain SCRI 1043 / ATCC BAA-672) (Erwinia carotovora subsp. atroseptica) protein is 3-dehydroquinate synthase.